We begin with the raw amino-acid sequence, 179 residues long: UPF0302 protein EF_1554 (179 aa).

It belongs to the UPF0302 family.

The chain is UPF0302 protein EF_1554 from Enterococcus faecalis (strain ATCC 700802 / V583).